The sequence spans 92 residues: Cell wall protein CWP2 (92 aa).

The N-terminal stretch at 1 to 20 is a signal peptide; sequence MQFSTVASVAFVALANFVAA. The PIR1/2/3 repeat unit spans residues 24 to 37; it reads AAISQITDGQIQAT. The segment at 41-60 is disordered; that stretch reads TTEATTTAAPSSTVETVSPS. Asn-71 carries the GPI-anchor amidated asparagine lipid modification. A propeptide spans 72–92 (removed in mature form); sequence GAAKAAVGMGAGALAAAAMLL.

The protein belongs to the SRP1/TIP1 family. Post-translationally, extensively O-glycosylated. The GPI-anchor is attached to the protein in the endoplasmic reticulum and serves to target the protein to the cell surface. There, the glucosamine-inositol phospholipid moiety is cleaved off and the GPI-modified mannoprotein is covalently attached via its lipidless GPI glycan remnant to the 1,6-beta-glucan of the outer cell wall layer. In terms of processing, covalently linked to beta-1,3-glucan of the inner cell wall layer via an alkali-sensitive ester linkage between the gamma-carboxyl group of glutamic acids, arising from a specific glutamine within the PIR1/2/3 repeat, and hydroxyl groups of glucoses of beta-1,3-glucan chains.

It localises to the secreted. It is found in the cell wall. The protein resides in the membrane. Functionally, component of the cell wall. In Saccharomyces cerevisiae (strain ATCC 204508 / S288c) (Baker's yeast), this protein is Cell wall protein CWP2 (CWP2).